A 434-amino-acid polypeptide reads, in one-letter code: Nucleobase transporter PlUacP (434 aa).

The next 12 helical transmembrane spans lie at leucine 9–glycine 29, leucine 39–tryptophan 59, phenylalanine 63–isoleucine 83, alanine 93–glycine 113, phenylalanine 118–valine 138, alanine 159–isoleucine 179, alanine 181–valine 201, phenylalanine 218–isoleucine 238, valine 306–leucine 326, threonine 327–valine 347, leucine 365–phenylalanine 385, and isoleucine 394–phenylalanine 414.

It belongs to the nucleobase:cation symporter-2 (NCS2) (TC 2.A.40) family.

The protein localises to the cell membrane. With respect to regulation, inhibited by the proton gradient disruptor carbonyl cyanide m-chlorophenylhydrazone (CCCP), but not by the sodium gradient disruptor ouabain. Hypoxanthine, xanthine, cytosine and uric acid act as competitive inhibitors. In terms of biological role, uptake of the purines adenine and guanine, and the pyrimidine uracil. Transport is probably proton-dependent. This Paenibacillus larvae subsp. larvae (strain NRRL B-3650 / LMG 16245) protein is Nucleobase transporter PlUacP.